We begin with the raw amino-acid sequence, 439 residues long: Diaminopimelate decarboxylase (439 aa).

Lys66 carries the post-translational modification N6-(pyridoxal phosphate)lysine. Pyridoxal 5'-phosphate contacts are provided by residues Gly248 and 290 to 293 (EPGR). Substrate contacts are provided by Arg293, Arg330, and Tyr334. The active-site Proton donor is the Cys361. Substrate is bound by residues Glu362 and Tyr390. Tyr390 is a pyridoxal 5'-phosphate binding site.

It belongs to the Orn/Lys/Arg decarboxylase class-II family. LysA subfamily. As to quaternary structure, homodimer. It depends on pyridoxal 5'-phosphate as a cofactor.

The catalysed reaction is meso-2,6-diaminopimelate + H(+) = L-lysine + CO2. The protein operates within amino-acid biosynthesis; L-lysine biosynthesis via DAP pathway; L-lysine from DL-2,6-diaminopimelate: step 1/1. Its function is as follows. Specifically catalyzes the decarboxylation of meso-diaminopimelate (meso-DAP) to L-lysine. The sequence is that of Diaminopimelate decarboxylase from Bacillus subtilis (strain 168).